Here is a 281-residue protein sequence, read N- to C-terminus: Ribosomal RNA small subunit methyltransferase A (281 aa).

S-adenosyl-L-methionine contacts are provided by Asn-21, Leu-23, Gly-48, Glu-69, Asp-92, and Asn-113.

This sequence belongs to the class I-like SAM-binding methyltransferase superfamily. rRNA adenine N(6)-methyltransferase family. RsmA subfamily.

It localises to the cytoplasm. The catalysed reaction is adenosine(1518)/adenosine(1519) in 16S rRNA + 4 S-adenosyl-L-methionine = N(6)-dimethyladenosine(1518)/N(6)-dimethyladenosine(1519) in 16S rRNA + 4 S-adenosyl-L-homocysteine + 4 H(+). Functionally, specifically dimethylates two adjacent adenosines (A1518 and A1519) in the loop of a conserved hairpin near the 3'-end of 16S rRNA in the 30S particle. May play a critical role in biogenesis of 30S subunits. The sequence is that of Ribosomal RNA small subunit methyltransferase A from Ralstonia nicotianae (strain ATCC BAA-1114 / GMI1000) (Ralstonia solanacearum).